A 316-amino-acid chain; its full sequence is Ribosomal RNA small subunit methyltransferase H (316 aa).

Residues 35–37, aspartate 55, phenylalanine 84, aspartate 105, and glutamine 112 contribute to the S-adenosyl-L-methionine site; that span reads AGH.

The protein belongs to the methyltransferase superfamily. RsmH family.

The protein localises to the cytoplasm. It catalyses the reaction cytidine(1402) in 16S rRNA + S-adenosyl-L-methionine = N(4)-methylcytidine(1402) in 16S rRNA + S-adenosyl-L-homocysteine + H(+). Functionally, specifically methylates the N4 position of cytidine in position 1402 (C1402) of 16S rRNA. This is Ribosomal RNA small subunit methyltransferase H from Streptococcus pneumoniae (strain 70585).